The following is a 312-amino-acid chain: Ribosomal protein L11 methyltransferase (312 aa).

S-adenosyl-L-methionine-binding residues include Thr-160, Gly-181, Asp-203, and Asn-246.

Belongs to the methyltransferase superfamily. PrmA family.

It localises to the cytoplasm. It carries out the reaction L-lysyl-[protein] + 3 S-adenosyl-L-methionine = N(6),N(6),N(6)-trimethyl-L-lysyl-[protein] + 3 S-adenosyl-L-homocysteine + 3 H(+). Functionally, methylates ribosomal protein L11. The protein is Ribosomal protein L11 methyltransferase of Staphylococcus haemolyticus (strain JCSC1435).